The sequence spans 1687 residues: A-kinase anchor protein 12 (1687 aa).

Positions 1 to 108 are disordered; that stretch reads MGAGSSTEQR…EKDRVEEMAA (108 aa). A lipid anchor (N-myristoyl glycine) is attached at Gly2. Phosphoserine is present on residues Ser11, Ser18, Ser22, and Ser27. Residues 30-48 are compositionally biased toward low complexity; the sequence is GPAAEASGAAGDPADADPA. Over residues 52–62 the composition is skewed to polar residues; it reads PQKNGQLSTVN. Acidic residues predominate over residues 75–88; sequence ENQEGQEEEVVDED. A compositionally biased stretch (basic and acidic residues) spans 89 to 105; it reads VGQRESEDVREKDRVEE. Residues Ser136 and Ser204 each carry the phosphoserine modification. Disordered stretches follow at residues 175–282 and 298–355; these read SDTV…ETTS and KTSF…DYEK. Basic and acidic residues predominate over residues 213-230; it reads ASKESELKQSTEKQEGTL. Phosphoserine occurs at positions 235 and 245. A compositionally biased stretch (acidic residues) spans 247-259; that stretch reads QAAEEEAKDEGEE. The segment at 254 to 544 is involved in PKC-binding; it reads KDEGEEKQEK…QHIHTESPES (291 aa). A phosphoserine mark is found at Ser268, Ser271, Ser274, and Ser304. A compositionally biased stretch (low complexity) spans 268–282; the sequence is SPESPSSPVSSETTS. Over residues 303–321 the composition is skewed to basic and acidic residues; sequence KSKEDDLETAEKRKEQEAE. A Phosphothreonine modification is found at Thr331. Residues 334–344 show a composition bias toward acidic residues; that stretch reads ASEEQEPAEDT. 2 positions are modified to phosphoserine: Ser335 and Ser350. Position 353 is a phosphotyrosine (Tyr353). A Phosphoserine modification is found at Ser371. The segment at 402–481 is disordered; it reads VEKTEEEQGG…EKTLPKHPEG (80 aa). The span at 417–426 shows a compositional bias: low complexity; it reads GGVVVEGTGE. Phosphoserine is present on Ser469. Residues 470 to 480 show a composition bias toward basic and acidic residues; sequence PEEKTLPKHPE. Ser491, Ser507, and Ser509 each carry phosphoserine. Residues 496 to 828 form a disordered region; the sequence is KVQGSPLKKL…INEDDPDVPA (333 aa). Residues 499 to 513 show a composition bias toward low complexity; it reads GSPLKKLFSSSGLKK. Basic residues predominate over residues 514 to 523; it reads LSGKKQKGKR. A compositionally biased stretch (basic and acidic residues) spans 533-550; sequence EYQHIHTESPESADEQKG. Phosphoserine is present on residues Ser541, Ser544, Ser585, Ser599, Ser614, and Ser616. The short motif at 594 to 614 is the AKAP CaM-binding 1 element; that stretch reads ITPWASFKKMVTPKKRVRRPS. The segment covering 612–626 has biased composition (basic and acidic residues); that stretch reads RPSESDKEEELEKVK. The segment covering 628–639 has biased composition (polar residues); sequence ATLSSTDSTVSE. Phosphothreonine is present on Thr629. Ser631, Ser632, Ser635, and Ser638 each carry phosphoserine. The span at 642 to 661 shows a compositional bias: basic and acidic residues; it reads DEVKTVGEEQKPEEPKRRVD. A phosphoserine mark is found at Ser683, Ser684, and Ser685. Over residues 697–711 the composition is skewed to basic and acidic residues; that stretch reads DSHRAEEASKDKEAG. Positions 717 to 726 are enriched in polar residues; that stretch reads ASTQEQDQAQ. Residues 727–744 show a composition bias toward low complexity; that stretch reads GSSSPEPAGSPSEGEGVS. A phosphoserine mark is found at Ser736, Ser748, Ser770, Ser771, and Ser789. The AKAP CaM-binding 2 motif lies at 743 to 763; sequence VSTWESFKRLVTPRKKSKSKL. An AKAP CaM-binding 3 motif is present at residues 784 to 804; it reads EESWVSIKKFIPGRRKKRADG. Thr871 carries the post-translational modification Phosphothreonine. Position 873 is a phosphoserine (Ser873). Residues 959 to 981 form a disordered region; sequence ETSEALRTEEVTEASGAEETTDM. Lys1030 participates in a covalent cross-link: Glycyl lysine isopeptide (Lys-Gly) (interchain with G-Cter in SUMO1). The segment covering 1035–1045 has biased composition (polar residues); the sequence is VPATQTVQRTG. Disordered stretches follow at residues 1035 to 1105, 1125 to 1221, 1277 to 1361, and 1443 to 1487; these read VPAT…EVTA, AVAP…LAAA, CQEK…QDKA, and TPAP…TAIE. The residue at position 1059 (Ser1059) is a Phosphoserine. Polar residues predominate over residues 1130–1157; that stretch reads SSETLTDSETNGSTPLADSDTADGTQQD. Over residues 1199–1211 the composition is skewed to basic and acidic residues; that stretch reads QEEHGEEPGRDVL. A Phosphoserine modification is found at Ser1289. Positions 1298–1310 are enriched in basic and acidic residues; the sequence is DVEKEKRETKPEQ. Phosphoserine occurs at positions 1348, 1352, and 1354. A compositionally biased stretch (basic and acidic residues) spans 1462–1487; sequence QRERSEEEDKPDAGPDADGKESTAIE. Residues 1498 to 1511 form an RII-binding region; sequence ELESKSNKIVLNVI. Disordered stretches follow at residues 1522-1582 and 1599-1687; these read ETAP…GSAS and IEKL…LAES. Over residues 1530–1547 the composition is skewed to polar residues; that stretch reads YDSQTQVPAMQADSQGAQ. Phosphoserine occurs at positions 1543 and 1571. Positions 1618 to 1630 are enriched in low complexity; the sequence is QLQSLAQAEASAS. Phosphoserine is present on Ser1637. Over residues 1645 to 1687 the composition is skewed to basic and acidic residues; that stretch reads LTEEGDAPKVEVQEEEMSTKSVKENKAQAEEDLQEPKGDLAES.

Binds to dimeric RII-alpha regulatory subunit of PKC. Post-translationally, phosphorylated by PKC (in vitro).

It is found in the cytoplasm. It localises to the cytoskeleton. Its subcellular location is the membrane. Functionally, anchoring protein that mediates the subcellular compartmentation of protein kinase A (PKA) and protein kinase C (PKC). The sequence is that of A-kinase anchor protein 12 (Akap12) from Rattus norvegicus (Rat).